The sequence spans 263 residues: Hydroxyacylglutathione hydrolase (263 aa).

The Zn(2+) site is built by histidine 55, histidine 57, aspartate 59, histidine 60, histidine 117, aspartate 134, and histidine 172.

It belongs to the metallo-beta-lactamase superfamily. Glyoxalase II family. Monomer. Requires Zn(2+) as cofactor.

The enzyme catalyses an S-(2-hydroxyacyl)glutathione + H2O = a 2-hydroxy carboxylate + glutathione + H(+). The protein operates within secondary metabolite metabolism; methylglyoxal degradation; (R)-lactate from methylglyoxal: step 2/2. In terms of biological role, thiolesterase that catalyzes the hydrolysis of S-D-lactoyl-glutathione to form glutathione and D-lactic acid. The chain is Hydroxyacylglutathione hydrolase from Shewanella baltica (strain OS223).